Consider the following 482-residue polypeptide: E3 ubiquitin-protein ligase parkin (482 aa).

The region spanning 30 to 99 (LSIYVKTNTG…LGQQSVLHAI (70 aa)) is the Ubiquitin-like domain. Position 94 is a phosphoserine; by Pink1 (Ser-94). The RING-type 0; atypical zinc finger occupies 157–246 (AHFFVHCSQC…SGGEKDFAAP (90 aa)). The Zn(2+) site is built by Cys-163, Cys-166, Cys-178, and Cys-181. Position 187 is a phosphothreonine; by Pink1 (Thr-187). Cys-208, Cys-232, His-235, Cys-259, Cys-262, Cys-274, His-278, Cys-281, Cys-284, Cys-310, Cys-314, Cys-353, Cys-358, Cys-373, Cys-377, Cys-382, Cys-385, His-390, Cys-394, Cys-436, and Cys-439 together coordinate Zn(2+). The TRIAD supradomain stretch occupies residues 255–482 (KNVPCLACTD…RDCMGAHWFG (228 aa)). An RING-type 1 zinc finger spans residues 259-314 (CLACTDVSDTVLVFPCASQHVTCIDCFRHYCRSRLGERQFMPHPDFGYTLPCPAGC). IBR-type zinc fingers lie at residues 334-394 (DRYQ…IGEC) and 432-473 (STKP…EWTR). The segment at 436 to 467 (CPKCRTPTERDGGCMHMVCTRAGCGFEWCWVC) adopts an RING-type 2; atypical zinc-finger fold. Cys-449 is a catalytic residue. Residues Cys-454, Cys-459, Cys-464, Cys-467, Cys-475, and His-479 each coordinate Zn(2+).

This sequence belongs to the RBR family. Parkin subfamily. In terms of assembly, forms an E3 ubiquitin ligase complex with E2 ubiquitin-conjugating enzymes. Interacts with Pink1. Interacts with Marf. Interacts with Paris. Interacts with septins Septin1 and pnut. In terms of processing, auto-ubiquitinates in an E2-dependent manner leading to its own degradation. Post-translationally, phosphorylated. Activation requires phosphorylation at Ser-94 by Pink1 and binding to Pink1-phosphorylated polyubiquitin chains. Phosphorylation at Thr-187 by Pink1 is also important for mitochondrial localization. In oocytes, accumulates in early egg chambers where it is enriched until stages 9-10, localizing mainly to the posterior pole and anterior margin (at protein level). After stage 10 it is no longer detected in the oocyte (at protein level). In embryos, ubiquitously expressed in the early stages (stages 2 to 5) (at protein level). Expression levels decrease at later stages and becomes restricted to the brain and nerve cord from stage 9 (at protein level). Relatively higher levels of expression in the head compared to the body. Enriched in the dorsomedial (DM) dopaminergic neurons.

The protein localises to the mitochondrion. The protein resides in the cytoplasm. It is found in the cytosol. It catalyses the reaction [E2 ubiquitin-conjugating enzyme]-S-ubiquitinyl-L-cysteine + [acceptor protein]-L-lysine = [E2 ubiquitin-conjugating enzyme]-L-cysteine + [acceptor protein]-N(6)-ubiquitinyl-L-lysine.. It participates in protein modification; protein ubiquitination. With respect to regulation, in the autoinhibited state the side chain of Phe-481 inserts into a hydrophobic groove in RING-0, occluding the ubiquitin acceptor site Cys-449, whereas the REP repressor element binds RING-1 and blocks its E2-binding site. Activation of park requires 2 steps: (1) phosphorylation at Ser-94 by Pink1 and (2) binding to phosphorylated ubiquitin, leading to unlock repression of the catalytic Cys-449 by the RING-0 region via an allosteric mechanism and converting park to its fully-active form. According to another report, phosphorylation at Ser-94 by Pink1 is not essential for activation and only binding to phosphorylated ubiquitin is essential to unlock repression. In terms of biological role, E3 ubiquitin-protein ligase which accepts ubiquitin from E2 ubiquitin-conjugating enzymes in the form of a thioester and then directly transfers the ubiquitin to targeted substrates, such as Paris, Marf, Opa1, Miro, pnut, Septin1, Tom20 and porin. Mediates monoubiquitination as well as 'Lys-6', 'Lys-11', 'Lys-48'-linked and 'Lys-63'-linked polyubiquitination of substrates, depending on the context. Protects against mitochondrial dysfunction during cellular stress, by acting downstream of Pink1, to coordinate mitochondrial quality control mechanisms that remove and replace dysfunctional mitochondrial components. Depending on the severity of mitochondrial damage and/or dysfunction, activity ranges from preventing apoptosis and stimulating mitochondrial biogenesis to regulating mitochondrial dynamics and eliminating severely damaged mitochondria via mitophagy. Appears to be particularly important in maintaining the physiology and function of cells with high energy demands that are undergoing stress or altered metabolic environment, including spermatids, muscle cells and neurons such as the dopaminergic (DA) neurons. Activation and recruitment onto the outer membrane of damaged/dysfunctional mitochondria (OMM) requires Pink1-mediated phosphorylation of both park and ubiquitin. In depolarized mitochondria, mediates the decision between mitophagy or preventing apoptosis by inducing either the poly- or monoubiquitination of porin/VDAC; polyubiquitination of porin promotes mitophagy, while monoubiquitination of porin decreases mitochondrial calcium influx which ultimately inhibits apoptosis. When cellular stress results in irreversible mitochondrial damage, promotes the autophagic degradation of dysfunctional depolarized mitochondria (mitophagy) by promoting the ubiquitination of mitochondrial proteins. Preferentially assembles 'Lys-6'-, 'Lys-11'- and 'Lys-63'-linked polyubiquitin chains following mitochondrial damage, leading to mitophagy. In developing tissues, inhibits JNK-mediated apoptosis by negatively regulating bsk transcription. The Pink1-park pathway also promotes fission and/or inhibits fusion of damaged mitochondria by mediating the ubiquitination and subsequent degradation of proteins involved in mitochondrial fusion/fission such as Marf, Opa1 and fzo. This prevents the refusion of unhealthy mitochondria with the healthy mitochondrial network and/or initiates mitochondrial fragmentation facilitating their later engulfment by autophagosomes. Regulates motility of damaged mitochondria by phosphorylating Miro which likely promotes its park-dependent degradation by the proteasome; in motor neurons, this inhibits mitochondrial intracellular anterograde transport along the axons which probably increases the chance of the mitochondria being eliminated in the soma. The Pink1-park pathway is also involved in mitochondrial regeneration processes such as promoting mitochondrial biogenesis, activating localized mitochondrial repair, promoting selective turnover of mitochondrial proteins and initiating the mitochondrial import of endogenous proteins. Involved in mitochondrial biogenesis via the ubiquitination of transcriptional repressor Paris which leads to its subsequent proteasomal degradation and allows activation of the transcription factor srl. Promotes localized mitochondrial repair by activating the translation of specific nuclear-encoded mitochondrial RNAs (nc-mtRNAs) on the mitochondrial surface, including several key electron transport chain component nc-mtRNAs. The protein is E3 ubiquitin-protein ligase parkin of Drosophila melanogaster (Fruit fly).